A 349-amino-acid polypeptide reads, in one-letter code: Nicotinate-nucleotide--dimethylbenzimidazole phosphoribosyltransferase (349 aa).

A disordered region spans residues 1 to 20 (MEFATVSPPDPGTAAAARAR). The Proton acceptor role is filled by Glu313.

This sequence belongs to the CobT family.

It catalyses the reaction 5,6-dimethylbenzimidazole + nicotinate beta-D-ribonucleotide = alpha-ribazole 5'-phosphate + nicotinate + H(+). It participates in nucleoside biosynthesis; alpha-ribazole biosynthesis; alpha-ribazole from 5,6-dimethylbenzimidazole: step 1/2. In terms of biological role, catalyzes the synthesis of alpha-ribazole-5'-phosphate from nicotinate mononucleotide (NAMN) and 5,6-dimethylbenzimidazole (DMB). The protein is Nicotinate-nucleotide--dimethylbenzimidazole phosphoribosyltransferase of Mycolicibacterium paratuberculosis (strain ATCC BAA-968 / K-10) (Mycobacterium paratuberculosis).